Reading from the N-terminus, the 478-residue chain is Divinyl ether synthase CYP74D2 (478 aa).

Residue C431 participates in heme binding.

The protein belongs to the cytochrome P450 family. 9-divinyl ether synthase subfamily. In terms of tissue distribution, expressed in roots.

It catalyses the reaction (9S)-hydroperoxy-(10E,12Z)-octadecadienoate = colneleate + H2O. It carries out the reaction (9S)-hydroperoxy-(10E,12Z,15Z)-octadecatrienoate = colnelenate + H2O. Its function is as follows. Involved in the biosynthesis of the anti-fungal and antibacterial toxins colneleate and colnelenate. Can use (9S)-hydroperoxy-(10E,12Z)-octadecadienoate (9-HPOD) and (9S)-hydroperoxy-(10E,12Z,15Z)-octadecatrienoate (9-HPOT) as substrates but has no activity with the corresponding 13-hydroperoxides (13-HPOD and 13-HPOT). This is Divinyl ether synthase CYP74D2 from Solanum tuberosum (Potato).